Consider the following 227-residue polypeptide: NDR1/HIN1-like protein 10 (227 aa).

The chain crosses the membrane as a helical span at residues 42 to 62; sequence VKVIISLIVILGVAALIFWLI. N-linked (GlcNAc...) asparagine glycosylation is found at asparagine 138 and asparagine 210.

Expressed in senescing leaves.

It localises to the cell membrane. May play a role in plant immunity. The chain is NDR1/HIN1-like protein 10 from Arabidopsis thaliana (Mouse-ear cress).